We begin with the raw amino-acid sequence, 22 residues long: 2.4 kDa venom peptide (22 aa).

Post-translationally, contains 2 disulfide bonds. As to expression, expressed by the venom gland.

The protein localises to the secreted. In terms of biological role, not lethal to mice by intraperitoneal or intracerebroventricular injections in doses up to 150 micrograms. This is 2.4 kDa venom peptide from Heterometrus spinifer (Asia giant forest scorpion).